We begin with the raw amino-acid sequence, 536 residues long: Peptide chain release factor 3 (536 aa).

The region spanning 13-281 is the tr-type G domain; the sequence is SHRRTFAIIS…ALIDWAPAPQ (269 aa). GTP is bound by residues 22-29, 90-94, and 144-147; these read SHPDAGKT, DTPGH, and NKCD.

It belongs to the TRAFAC class translation factor GTPase superfamily. Classic translation factor GTPase family. PrfC subfamily.

It localises to the cytoplasm. Increases the formation of ribosomal termination complexes and stimulates activities of RF-1 and RF-2. It binds guanine nucleotides and has strong preference for UGA stop codons. It may interact directly with the ribosome. The stimulation of RF-1 and RF-2 is significantly reduced by GTP and GDP, but not by GMP. The protein is Peptide chain release factor 3 of Chromobacterium violaceum (strain ATCC 12472 / DSM 30191 / JCM 1249 / CCUG 213 / NBRC 12614 / NCIMB 9131 / NCTC 9757 / MK).